A 504-amino-acid chain; its full sequence is L-carnitine/gamma-butyrobetaine antiporter (504 aa).

12 helical membrane passes run 10 to 30, 51 to 71, 92 to 112, 143 to 163, 195 to 215, 231 to 251, 263 to 283, 316 to 336, 347 to 367, 398 to 418, 446 to 466, and 475 to 495; these read IEPK…WLTV, WGWA…WLVF, IFMM…SIEI, GPLP…FFFV, FYLV…TPLV, LDAI…ACGL, SYLS…SFIM, WTVF…IFLA, LCFG…TVLG, WAAL…CFIA, LLVR…LLAL, and AIIA…LSFI.

This sequence belongs to the BCCT transporter (TC 2.A.15) family. CaiT subfamily. Homotrimer.

The protein resides in the cell inner membrane. It carries out the reaction 4-(trimethylamino)butanoate(in) + (R)-carnitine(out) = 4-(trimethylamino)butanoate(out) + (R)-carnitine(in). It functions in the pathway amine and polyamine metabolism; carnitine metabolism. In terms of biological role, catalyzes the exchange of L-carnitine for gamma-butyrobetaine. The polypeptide is L-carnitine/gamma-butyrobetaine antiporter (Escherichia coli (strain ATCC 8739 / DSM 1576 / NBRC 3972 / NCIMB 8545 / WDCM 00012 / Crooks)).